Reading from the N-terminus, the 201-residue chain is Holliday junction branch migration complex subunit RuvA (201 aa).

A domain I region spans residues 1 to 63; that stretch reads MIAYLSGVVR…EDAQLLFGFP (63 aa). Residues 64–142 form a domain II region; the sequence is DADHLKLFDL…EHLAAAASGA (79 aa). The tract at residues 143 to 150 is flexible linker; sequence AGGKRPAR. Positions 151–201 are domain III; that stretch reads VSSTAGHDAVDALLALGFREAQVRAAVAELLGADPEASADTLIRKALGRLR.

Belongs to the RuvA family. Homotetramer. Forms an RuvA(8)-RuvB(12)-Holliday junction (HJ) complex. HJ DNA is sandwiched between 2 RuvA tetramers; dsDNA enters through RuvA and exits via RuvB. An RuvB hexamer assembles on each DNA strand where it exits the tetramer. Each RuvB hexamer is contacted by two RuvA subunits (via domain III) on 2 adjacent RuvB subunits; this complex drives branch migration. In the full resolvosome a probable DNA-RuvA(4)-RuvB(12)-RuvC(2) complex forms which resolves the HJ.

The protein resides in the cytoplasm. In terms of biological role, the RuvA-RuvB-RuvC complex processes Holliday junction (HJ) DNA during genetic recombination and DNA repair, while the RuvA-RuvB complex plays an important role in the rescue of blocked DNA replication forks via replication fork reversal (RFR). RuvA specifically binds to HJ cruciform DNA, conferring on it an open structure. The RuvB hexamer acts as an ATP-dependent pump, pulling dsDNA into and through the RuvAB complex. HJ branch migration allows RuvC to scan DNA until it finds its consensus sequence, where it cleaves and resolves the cruciform DNA. The chain is Holliday junction branch migration complex subunit RuvA from Deinococcus radiodurans (strain ATCC 13939 / DSM 20539 / JCM 16871 / CCUG 27074 / LMG 4051 / NBRC 15346 / NCIMB 9279 / VKM B-1422 / R1).